The following is a 154-amino-acid chain: MNATLLGQAIAFTLFVWFCMKYVWPPIMEAIEERQKKIADGLSAAERAAKDLDLAQANASDQLKEAKRAATEIIEQANKRKSQILDEAREEALVERQKILTQGEAELESERNRARDELRKQVATLAVIGAEKILERSIDVEAQKDILDNITAKL.

A helical membrane pass occupies residues Leu5–Ile27.

This sequence belongs to the ATPase B chain family. As to quaternary structure, F-type ATPases have 2 components, F(1) - the catalytic core - and F(0) - the membrane proton channel. F(1) has five subunits: alpha(3), beta(3), gamma(1), delta(1), epsilon(1). F(0) has three main subunits: a(1), b(2) and c(10-14). The alpha and beta chains form an alternating ring which encloses part of the gamma chain. F(1) is attached to F(0) by a central stalk formed by the gamma and epsilon chains, while a peripheral stalk is formed by the delta and b chains.

It is found in the cell inner membrane. F(1)F(0) ATP synthase produces ATP from ADP in the presence of a proton or sodium gradient. F-type ATPases consist of two structural domains, F(1) containing the extramembraneous catalytic core and F(0) containing the membrane proton channel, linked together by a central stalk and a peripheral stalk. During catalysis, ATP synthesis in the catalytic domain of F(1) is coupled via a rotary mechanism of the central stalk subunits to proton translocation. In terms of biological role, component of the F(0) channel, it forms part of the peripheral stalk, linking F(1) to F(0). The chain is ATP synthase subunit b from Aliivibrio fischeri (strain ATCC 700601 / ES114) (Vibrio fischeri).